The chain runs to 453 residues: MSFDLIIKNGTVILENEARVVDIAVKGGKIAAIGQDLGDAKEVMDASGLVVSPGMVDAHTHISEPGRSHWEGYETGTRAAAKGGITTMIEMPLNQLPATVDRASIELKFDAAKGKLTIDAAQLGGLVSYNIDRLHELDEVGVVGFKCFVATCGDRGIDNDFRDVNDWQFFKGAQKLGELGQPVLVHCENALICDALGEEAKSEGRVTAHDYVASRPVFTEVEAIRRVLYLAKVAGCRLHICHISSPEGVEEVTRARQEGQDVTCESCPHYFVLDTDQFEEIGTLAKCSPPIRDLENQKGMWEKLFNGEIDCLVSDHSPCPPEMKAGNIMEAWGGIAGLQNCMDVMFDEAVQKRGMSLPMFGKLMATNAADIFGLQQKGRIAPGKDAEFVFIQPNSSYVLTNDDLEYRHKVSPYVGRTIGARITKTILRGDVIYDIEQGFPVAPKGQFILKHQQ.

Zn(2+) is bound by residues histidine 59, histidine 61, lysine 146, histidine 186, histidine 242, and aspartate 315. Lysine 146 is modified (N6-carboxylysine).

Belongs to the metallo-dependent hydrolases superfamily. Allantoinase family. As to quaternary structure, homotetramer. It depends on Zn(2+) as a cofactor. In terms of processing, carboxylation allows a single lysine to coordinate two zinc ions.

It catalyses the reaction (S)-allantoin + H2O = allantoate + H(+). The protein operates within nitrogen metabolism; (S)-allantoin degradation; allantoate from (S)-allantoin: step 1/1. In terms of biological role, catalyzes the conversion of allantoin (5-ureidohydantoin) to allantoic acid by hydrolytic cleavage of the five-member hydantoin ring. The polypeptide is Allantoinase (Escherichia coli O9:H4 (strain HS)).